Reading from the N-terminus, the 427-residue chain is Lupus La protein homolog B (427 aa).

In terms of domain architecture, HTH La-type RNA-binding spans 6 to 98 (DKEQLDLDTK…RRSPAKPLPE (93 aa)). Residues 110–202 (RSVYIKGFPT…EERKLNKSEE (93 aa)) enclose the RRM domain. Disordered stretches follow at residues 193–220 (EERKLNKSEEKAKSKQEKEEAQKQAEDA) and 319–427 (EGKQ…VGDQ). The region spanning 226 to 348 (EERVGCLLKF…KGRGGKGNDS (123 aa)) is the xRRM domain. The Nuclear localization signal motif lies at 315–331 (KKIMEGKQESFNKRKGR). Basic residues-rich tracts occupy residues 327–342 (KRKGRDGRKFKGKGRG) and 351–360 (RKKIQFQGKK). Positions 365 to 376 (SSDDEDDMEESE) are enriched in acidic residues. The segment covering 405–427 (RALDDKAEDGPAVKQSKTEVGDQ) has biased composition (basic and acidic residues).

Post-translationally, phosphorylated.

It localises to the nucleus. La protein plays a role in the transcription of RNA polymerase III. It is most probably a transcription termination factor. Binds to the 3' termini of virtually all nascent polymerase III transcripts. In Xenopus laevis (African clawed frog), this protein is Lupus La protein homolog B (ssb-b).